A 266-amino-acid polypeptide reads, in one-letter code: Hydroxyethylthiazole kinase (266 aa).

Methionine 45 is a substrate binding site. ATP is bound by residues arginine 120 and threonine 165. Alanine 192 is a substrate binding site.

It belongs to the Thz kinase family. Mg(2+) serves as cofactor.

It carries out the reaction 5-(2-hydroxyethyl)-4-methylthiazole + ATP = 4-methyl-5-(2-phosphooxyethyl)-thiazole + ADP + H(+). It functions in the pathway cofactor biosynthesis; thiamine diphosphate biosynthesis; 4-methyl-5-(2-phosphoethyl)-thiazole from 5-(2-hydroxyethyl)-4-methylthiazole: step 1/1. Catalyzes the phosphorylation of the hydroxyl group of 4-methyl-5-beta-hydroxyethylthiazole (THZ). The sequence is that of Hydroxyethylthiazole kinase from Psychrobacter sp. (strain PRwf-1).